A 125-amino-acid polypeptide reads, in one-letter code: Cholecystokinin-8 (125 aa).

Residues 1-20 (MYSGICSCLFLAVLSSSSLG) form the signal peptide. Positions 21–105 (QQISGSQHAN…FDPTHRIKDR (85 aa)) are excised as a propeptide. Position 107 is a sulfotyrosine (Tyr-107). Position 113 is a phenylalanine amide (Phe-113). A propeptide spanning residues 114–125 (GRRSAEEYEYSS) is cleaved from the precursor.

This sequence belongs to the gastrin/cholecystokinin family.

It is found in the secreted. In terms of biological role, hypotensive neuropeptide that binds cholecystokinin receptors (CCKAR). The chain is Cholecystokinin-8 (CCK) from Python molurus (Indian python).